The following is a 222-amino-acid chain: Eukaryotic translation initiation factor 3 subunit K (222 aa).

The PCI domain maps to 46 to 208; the sequence is YDLEANLAVL…KIKTKNITEK (163 aa).

This sequence belongs to the eIF-3 subunit K family. As to quaternary structure, component of the eukaryotic translation initiation factor 3 (eIF-3) complex. The eIF-3 complex interacts with pix.

Its subcellular location is the cytoplasm. Its function is as follows. Component of the eukaryotic translation initiation factor 3 (eIF-3) complex, which is involved in protein synthesis of a specialized repertoire of mRNAs and, together with other initiation factors, stimulates binding of mRNA and methionyl-tRNAi to the 40S ribosome. The eIF-3 complex specifically targets and initiates translation of a subset of mRNAs involved in cell proliferation. This is Eukaryotic translation initiation factor 3 subunit K from Drosophila persimilis (Fruit fly).